The sequence spans 243 residues: tRNA (guanine-N(1)-)-methyltransferase (243 aa).

S-adenosyl-L-methionine-binding positions include Gly-113 and 133-138 (IGDFVL).

Belongs to the RNA methyltransferase TrmD family. As to quaternary structure, homodimer.

Its subcellular location is the cytoplasm. It carries out the reaction guanosine(37) in tRNA + S-adenosyl-L-methionine = N(1)-methylguanosine(37) in tRNA + S-adenosyl-L-homocysteine + H(+). Specifically methylates guanosine-37 in various tRNAs. In Bacillus velezensis (strain DSM 23117 / BGSC 10A6 / LMG 26770 / FZB42) (Bacillus amyloliquefaciens subsp. plantarum), this protein is tRNA (guanine-N(1)-)-methyltransferase.